Reading from the N-terminus, the 272-residue chain is Type III pantothenate kinase (272 aa).

An ATP-binding site is contributed by 6–13 (DVRNTHTV). Residue 109 to 112 (GADR) coordinates substrate. Residue Asp111 is the Proton acceptor of the active site. Residue Asp131 coordinates K(+). Residue Ser134 coordinates ATP. Residue Thr186 coordinates substrate.

This sequence belongs to the type III pantothenate kinase family. Homodimer. Requires NH4(+) as cofactor. It depends on K(+) as a cofactor.

It localises to the cytoplasm. It catalyses the reaction (R)-pantothenate + ATP = (R)-4'-phosphopantothenate + ADP + H(+). Its pathway is cofactor biosynthesis; coenzyme A biosynthesis; CoA from (R)-pantothenate: step 1/5. Catalyzes the phosphorylation of pantothenate (Pan), the first step in CoA biosynthesis. The sequence is that of Type III pantothenate kinase from Mycobacterium marinum (strain ATCC BAA-535 / M).